A 196-amino-acid polypeptide reads, in one-letter code: Orotate phosphoribosyltransferase (196 aa).

Residues Arg-102, Lys-103, Lys-106, His-108, and 129–137 each bind 5-phospho-alpha-D-ribose 1-diphosphate; that span reads EDVVTTGGS. Orotate-binding residues include Thr-133 and Arg-161.

Belongs to the purine/pyrimidine phosphoribosyltransferase family. PyrE subfamily. Homodimer. The cofactor is Mg(2+).

The enzyme catalyses orotidine 5'-phosphate + diphosphate = orotate + 5-phospho-alpha-D-ribose 1-diphosphate. The protein operates within pyrimidine metabolism; UMP biosynthesis via de novo pathway; UMP from orotate: step 1/2. Functionally, catalyzes the transfer of a ribosyl phosphate group from 5-phosphoribose 1-diphosphate to orotate, leading to the formation of orotidine monophosphate (OMP). This Prochlorococcus marinus (strain MIT 9303) protein is Orotate phosphoribosyltransferase.